A 188-amino-acid polypeptide reads, in one-letter code: Probable nicotinate-nucleotide adenylyltransferase (188 aa).

It belongs to the NadD family.

The enzyme catalyses nicotinate beta-D-ribonucleotide + ATP + H(+) = deamido-NAD(+) + diphosphate. It participates in cofactor biosynthesis; NAD(+) biosynthesis; deamido-NAD(+) from nicotinate D-ribonucleotide: step 1/1. Its function is as follows. Catalyzes the reversible adenylation of nicotinate mononucleotide (NaMN) to nicotinic acid adenine dinucleotide (NaAD). The protein is Probable nicotinate-nucleotide adenylyltransferase of Acholeplasma laidlawii (strain PG-8A).